Consider the following 382-residue polypeptide: Mannitol-1-phosphate 5-dehydrogenase (382 aa).

Residue Ala-4–Gly-15 coordinates NAD(+).

It belongs to the mannitol dehydrogenase family.

The catalysed reaction is D-mannitol 1-phosphate + NAD(+) = beta-D-fructose 6-phosphate + NADH + H(+). The protein is Mannitol-1-phosphate 5-dehydrogenase of Vibrio vulnificus (strain YJ016).